We begin with the raw amino-acid sequence, 969 residues long: Translation initiation factor IF-2 (969 aa).

Residues serine 50–leucine 370 form a disordered region. The segment covering lysine 54–threonine 76 has biased composition (low complexity). The segment covering proline 77–proline 87 has biased composition (pro residues). Low complexity predominate over residues alanine 88–alanine 102. A compositionally biased stretch (pro residues) spans alanine 112 to proline 124. Residues alanine 125 to glycine 164 show a composition bias toward low complexity. Residues proline 240 to glycine 267 show a composition bias toward pro residues. The span at serine 269–glycine 340 shows a compositional bias: gly residues. The span at arginine 344–lysine 353 shows a compositional bias: basic residues. The region spanning valine 465 to leucine 636 is the tr-type G domain. Residues glycine 474–threonine 481 form a G1 region. Glycine 474 to threonine 481 serves as a coordination point for GTP. The interval glycine 499–histidine 503 is G2. A G3 region spans residues aspartate 524–glycine 527. GTP contacts are provided by residues aspartate 524–histidine 528 and asparagine 578–aspartate 581. A G4 region spans residues asparagine 578–aspartate 581. Residues serine 614–lysine 616 form a G5 region.

Belongs to the TRAFAC class translation factor GTPase superfamily. Classic translation factor GTPase family. IF-2 subfamily.

The protein localises to the cytoplasm. Its function is as follows. One of the essential components for the initiation of protein synthesis. Protects formylmethionyl-tRNA from spontaneous hydrolysis and promotes its binding to the 30S ribosomal subunits. Also involved in the hydrolysis of GTP during the formation of the 70S ribosomal complex. In Nocardia farcinica (strain IFM 10152), this protein is Translation initiation factor IF-2.